We begin with the raw amino-acid sequence, 1012 residues long: Vacuolar membrane protease (1012 aa).

Over 1-60 (MRRSTDPRNLLVRRGPLLVDGESAISELDPGFFPTGDAPKMSSTTRRRFNLIAFTPGPVT) the chain is Cytoplasmic. A helical transmembrane segment spans residues 61 to 81 (VISSLVYLALLIPLLLVHTIV). The Vacuolar portion of the chain corresponds to 82-432 (PSAPKSNPKG…SFAVFRLHTL (351 aa)). N-linked (GlcNAc...) asparagine glycosylation occurs at Asn-159. Zn(2+) is bound by residues His-215 and Asp-227. Glu-261 (proton acceptor) is an active-site residue. Zn(2+)-binding residues include Glu-262, Glu-287, and His-360. A helical membrane pass occupies residues 433–453 (FAISVTLLVVCPIVLFVIGII). Over 454-487 (LSKMDKMYLFSIHETIPETKEKVSVRGLRGLFRY) the chain is Cytoplasmic. Residues 488-508 (PIILVVSSGILIGLSYLLAKV) traverse the membrane as a helical segment. Over 509–518 (NPFIVHSSSY) the chain is Vacuolar. The chain crosses the membrane as a helical span at residues 519 to 539 (AVWSMMLSSWIFMTWFLSCIA). Topologically, residues 540–550 (DFFRPSALHRA) are cytoplasmic. A helical transmembrane segment spans residues 551–571 (YTFTWQLLVMWVLLVISTVYV). The Vacuolar segment spans residues 572 to 575 (NQHD). A helical transmembrane segment spans residues 576-596 (IAAGYFIVFYFAGTFLATLIS). Residues 597–710 (YLELFALPNK…WSASLPTWTW (114 aa)) lie on the Cytoplasmic side of the membrane. A compositionally biased stretch (polar residues) spans 614–629 (SQYPSRLGSNRSSRIL). Residues 614–660 (SQYPSRLGSNRSSRILSPSADELPTGGDNNGEIYDGEEEPTESSSLL) form a disordered region. A helical membrane pass occupies residues 711 to 731 (VLQFLFVGPVVIMFIGQLGLF). The Vacuolar portion of the chain corresponds to 732 to 743 (LTSAMNQVGADG). Residues 744–764 (VGLLVVYIAIAVFSVLLLIPL) traverse the membrane as a helical segment. Residues 765 to 777 (SPFIHRFTYHVPT) lie on the Cytoplasmic side of the membrane. A helical transmembrane segment spans residues 778-798 (FLLLVFIATLIYNLAAFPFSA). Residues 799–1012 (ENRLKIFFVQ…DGLVEVSRGF (214 aa)) lie on the Vacuolar side of the membrane. Residues Asn-842 and Asn-878 are each glycosylated (N-linked (GlcNAc...) asparagine).

It belongs to the peptidase M28 family. The cofactor is Zn(2+).

It is found in the vacuole membrane. Its function is as follows. May be involved in vacuolar sorting and osmoregulation. This is Vacuolar membrane protease from Coccidioides posadasii (strain C735) (Valley fever fungus).